The sequence spans 460 residues: MMHIPRLMCTQHPDTTVKITTAEEVDEAIVAYTAYGCDEVMVDYEGKMTPYGQPKEIVMKAIRGDVPLGDEFYITVRLPNPKLEEFDRAMLSLEAALVANYFSRRYADAQAVRWVVLPMVEDFDTVILVRRMLRRKAEIYKSETGVDVGEVEVIPLIEDAFVQVKAKVIVGEVFKSEEAREVRVFLGKSDSAVRHGHLASALAIIYAMSKLKEFEAESGIRVRPILGMGSPPFRGALNNPRLAHLEVVQYAGYYTATIQSAVRYDTSLDEYVKVRESILNACCGTRGLVGEEVLPLIQEASAKYRSQAMKHVDKIAEVARLVPSTRDRVSWKEYGRSLLDGDRVVHMPRAIVYTSAWYAMGFPPTLIDAPLLLELAKSDKLDAVFKLLPTYKMELEYDYEFFDPQTARNYLSEELVYAAVELADYLGVEARPTPTYTALLKMPRSEPNIIALSKYRKFLG.

This sequence belongs to the PEPCase type 2 family. As to quaternary structure, homotetramer. It depends on Mg(2+) as a cofactor.

It carries out the reaction oxaloacetate + phosphate = phosphoenolpyruvate + hydrogencarbonate. In terms of biological role, catalyzes the irreversible beta-carboxylation of phosphoenolpyruvate (PEP) to form oxaloacetate (OAA), a four-carbon dicarboxylic acid source for the tricarboxylic acid cycle. The protein is Phosphoenolpyruvate carboxylase of Pyrobaculum arsenaticum (strain DSM 13514 / JCM 11321 / PZ6).